The primary structure comprises 240 residues: MASFTSNASKHQAELTVNRMFADILHTQPLRSAKSTTSNKSKSASKFGNDRKALSMPTPLSSTQILSQQLQPQLQQTRLSLKTGKSSQNNNKVKKLLKKKHEQDKKFQKFIKYSMIKNKMSTDPESLTLEEHKYLKKLAKRNINALQKYSKIDDFEIEQEMSSVKNELLKDLAPKKQTRLRKKLAIPAKKGSARSNANNQINDFDYERKLQKGLISAPGLTPGLAPVDYDDDEEEEEEED.

Disordered stretches follow at residues 28–67 (QPLR…QILS) and 215–240 (ISAP…EEED). Low complexity-rich tracts occupy residues 32 to 46 (SAKS…SASK) and 58 to 67 (TPLSSTQILS). Residues 228–240 (DYDDDEEEEEEED) are compositionally biased toward acidic residues.

The protein belongs to the RRT14 family.

It localises to the nucleus. The protein localises to the nucleolus. Functionally, involved in ribosome biogenesis, probably through modulation of rDNA transcription. The polypeptide is Regulator of rDNA transcription 14 (RRT14) (Lodderomyces elongisporus (strain ATCC 11503 / CBS 2605 / JCM 1781 / NBRC 1676 / NRRL YB-4239) (Yeast)).